Consider the following 125-residue polypeptide: Small ribosomal subunit protein eS8 (125 aa).

This sequence belongs to the eukaryotic ribosomal protein eS8 family. Part of the 30S ribosomal subunit.

The chain is Small ribosomal subunit protein eS8 from Methanosarcina mazei (strain ATCC BAA-159 / DSM 3647 / Goe1 / Go1 / JCM 11833 / OCM 88) (Methanosarcina frisia).